A 320-amino-acid polypeptide reads, in one-letter code: uncharacterized protein (320 aa).

Residue arginine 61 is modified to Omega-N-methylarginine. Positions leucine 299–alanine 320 are disordered. Over residues threonine 307–alanine 320 the composition is skewed to basic and acidic residues. Threonine 315 is subject to Phosphothreonine.

This is an uncharacterized protein from Mus musculus (Mouse).